Consider the following 481-residue polypeptide: Glycosyl hydrolase family 109 protein 1 (481 aa).

Positions 1–29 (MDNSSSRRRFLQTLGLATGALAAGSFANA) form a signal peptide, tat-type signal. NAD(+)-binding positions include 84 to 85 (ER), Asp106, 155 to 158 (WEWH), 175 to 176 (EV), and Asn204. Residues Tyr233, Arg252, 264–267 (YPTH), and Tyr347 contribute to the substrate site. Residue Tyr264 participates in NAD(+) binding.

The protein belongs to the Gfo/Idh/MocA family. Glycosyl hydrolase 109 subfamily. It depends on NAD(+) as a cofactor. Post-translationally, predicted to be exported by the Tat system. The position of the signal peptide cleavage has not been experimentally proven.

Glycosidase. This Akkermansia muciniphila (strain ATCC BAA-835 / DSM 22959 / JCM 33894 / BCRC 81048 / CCUG 64013 / CIP 107961 / Muc) protein is Glycosyl hydrolase family 109 protein 1.